The following is an 810-amino-acid chain: Plasminogen (810 aa).

Residues 1–19 form the signal peptide; that stretch reads MQRKELVLLFLLFLQPGHG. In terms of domain architecture, PAN spans 20–98; the sequence is IPLDDYVTTQ…RDVILFEKKM (79 aa). 24 cysteine pairs are disulfide-bonded: Cys49/Cys73, Cys53/Cys61, Cys103/Cys181, Cys124/Cys164, Cys152/Cys176, Cys185/Cys262, Cys188/Cys316, Cys206/Cys245, Cys234/Cys257, Cys275/Cys352, Cys296/Cys335, Cys324/Cys347, Cys379/Cys456, Cys400/Cys439, Cys428/Cys451, Cys482/Cys561, Cys503/Cys544, Cys532/Cys556, Cys569/Cys685, Cys579/Cys586, Cys607/Cys623, Cys699/Cys766, Cys729/Cys745, and Cys756/Cys784. Kringle domains lie at 103 to 181, 185 to 262, 275 to 352, 379 to 456, and 482 to 561; these read CKVG…IIQC, CMHC…IPRC, CLMG…IPDC, CYQG…LKKC, and CIID…IPHC. Asn339 is a glycosylation site (N-linked (GlcNAc...) asparagine). The segment at 398 to 418 is disordered; that stretch reads KKCQPWTSMRPHRHSKTPENY. Residues 582–808 enclose the Peptidase S1 domain; the sequence is RVGGCVAHPH…YVSWLQDVMR (227 aa). Residue Ser598 is modified to Phosphoserine. Catalysis depends on charge relay system residues His622 and Asp665. Ser760 acts as the Charge relay system in catalysis.

This sequence belongs to the peptidase S1 family. Plasminogen subfamily. In terms of assembly, interacts with CSPG4 and AMOT. Interacts (via the Kringle domains) with HRG; the interaction tethers PLG to the cell surface and enhances its activation. Interacts (via Kringle 4 domain) with ADA; the interaction stimulates PLG activation when in complex with DPP4. Angiostatin: Interacts with ATP5F1A; the interaction inhibits most of the angiogenic effects of angiostatin. Post-translationally, in the presence of the inhibitor, the activation involves only cleavage after Arg-582, yielding two chains held together by two disulfide bonds. In the absence of the inhibitor, the activation involves additionally the removal of the activation peptide.

The protein resides in the secreted. The catalysed reaction is Preferential cleavage: Lys-|-Xaa &gt; Arg-|-Xaa, higher selectivity than trypsin. Converts fibrin into soluble products.. Its activity is regulated as follows. Converted into plasmin by plasminogen activators, both plasminogen and its activator being bound to fibrin. Cannot be activated with streptokinase. Plasmin dissolves the fibrin of blood clots and acts as a proteolytic factor in a variety of other processes including embryonic development, tissue remodeling, tumor invasion, and inflammation. In ovulation, weakens the walls of the Graafian follicle. It activates the urokinase-type plasminogen activator, collagenases and several complement zymogens, such as C1, C4 and C5. Cleavage of fibronectin and laminin leads to cell detachment and apoptosis. Also cleaves fibrin, thrombospondin and von Willebrand factor. Its role in tissue remodeling and tumor invasion may be modulated by CSPG4. Binds to cells. This chain is Plasminogen (PLG), found in Erinaceus europaeus (Western European hedgehog).